A 367-amino-acid chain; its full sequence is Cyclin-dependent kinase 5 activator 2 (367 aa).

Positions 1–11 are enriched in polar residues; sequence MGTVLSLSPAS. 4 disordered regions span residues 1 to 56, 72 to 98, 131 to 175, and 329 to 367; these read MGTV…RLKR, ASAK…LVQQ, AAAT…GSPR, and GEAA…NLDR. G2 is lipidated: N-myristoyl glycine. A compositionally biased stretch (basic residues) spans 74-84; the sequence is AKKKKGSKKVT. T84 carries the post-translational modification Phosphothreonine. Residues 131 to 148 show a composition bias toward low complexity; it reads AAATCEPPSGGSAAAQPP. Residues 154 to 171 show a composition bias toward pro residues; it reads KPPPPPPPAPQVAPPVPG. Residues 342-357 are compositionally biased toward low complexity; the sequence is GAPAASSAARDSCAAG.

This sequence belongs to the cyclin-dependent kinase 5 activator family. Heterodimer of a catalytic subunit and a regulatory subunit. In terms of processing, myristoylated. The Gly-2-Ala mutant is absent of the cell periphery, suggesting that a proper myristoylation signal is essential for the proper distribution of CDK5R2 (p39). As to expression, brain and neuron specific.

The protein localises to the cell membrane. Functionally, activator of CDK5/TPKII. The polypeptide is Cyclin-dependent kinase 5 activator 2 (CDK5R2) (Homo sapiens (Human)).